A 562-amino-acid chain; its full sequence is Solute carrier family 40 member 1 (562 aa).

Topologically, residues 1 to 20 (MDSPASKKPRCERFREFFKS) are cytoplasmic. The helical transmembrane segment at 21-50 (AKFLIYVGHALSTWGDRMWNFAVAVFLVEL) threads the bilayer. Asp-36 contributes to the Fe cation binding site. Residues 51 to 54 (YGNS) are Extracellular-facing. Residues 55–81 (LLLTAVYGLVVAGSVLLLGAIIGDWVD) form a helical membrane-spanning segment. Residues 82 to 84 (KNP) are Cytoplasmic-facing. A helical transmembrane segment spans residues 85–115 (RLKVAQTSLVVQNSAVILCGALLMAVFQFKQ). Over 116–123 (QLSSMYDG) the chain is Extracellular. The chain crosses the membrane as a helical span at residues 124–159 (WLLTTCYIMVISIANIANLASTAMSITIQRDWVVVV). The Cytoplasmic portion of the chain corresponds to 160 to 161 (AG). Residues 162–192 (DDRSKLADMNATVRIIDQLTNILAPMLVGQI) form a helical membrane-spanning segment. At 193–199 (MAFGSHF) the chain is on the extracellular side. The helical transmembrane segment at 200-226 (IGCGFISGWNLFSMCLEYFLLWKVYQK) threads the bilayer. Over 227-300 (TPALAFKAGQ…DGWVAYYNQS (74 aa)) the chain is Cytoplasmic. Residues 301–327 (IFFAGMSLAFLYMTVLGFDCITTGYAY) form a helical membrane-spanning segment. Residue Cys-320 coordinates Fe cation. Residues 328-332 (TQGLN) are Extracellular-facing. A helical transmembrane segment spans residues 333–360 (GSVLSLLMGASAVSGICGTVAFTWIRKK). The Cytoplasmic segment spans residues 361–362 (CG). The helical transmembrane segment at 363-385 (LIRTGFIAGVTQLSCLTLCVASV) threads the bilayer. Over 386–444 (FAPGSPFDLSVSPFEEVLRHLFGDSGSLRESPTFIPTTEPPIQANVTVFEEAPPVESYM) the chain is Extracellular. A helical transmembrane segment spans residues 445 to 474 (SVGLLFAGVIAARVGLWSFDLTVTQLIQEN). The Cytoplasmic portion of the chain corresponds to 475-479 (VIESE). Residues 480 to 504 (RGVINGVQNSMNYLLDLLHFIMVIL) traverse the membrane as a helical segment. His-498 serves as a coordination point for Fe cation. Residues 505 to 507 (APN) are Extracellular-facing. A helical transmembrane segment spans residues 508 to 533 (PEAFGLLVIISVSFVAMGHMMYFRFA). At 534 to 562 (YKSLGSRLFLFCSPEQKPDPNIPSLPNSV) the chain is on the cytoplasmic side.

This sequence belongs to the ferroportin (FP) (TC 2.A.100) family. SLC40A subfamily. As to expression, expressed in the yolk sac and placenta.

It is found in the cell membrane. Its subcellular location is the basolateral cell membrane. It catalyses the reaction Fe(2+)(in) = Fe(2+)(out). In terms of biological role, transports Fe(2+) from the inside of a cell to the outside of the cell, playing a key role for maintaining systemic iron homeostasis. May be involved in transfer of Fe(2+) between maternal and fetal circulation. This chain is Solute carrier family 40 member 1 (slc40a1), found in Danio rerio (Zebrafish).